We begin with the raw amino-acid sequence, 679 residues long: Glycine--tRNA ligase beta subunit (679 aa).

The protein belongs to the class-II aminoacyl-tRNA synthetase family. Tetramer of two alpha and two beta subunits.

It localises to the cytoplasm. The catalysed reaction is tRNA(Gly) + glycine + ATP = glycyl-tRNA(Gly) + AMP + diphosphate. The chain is Glycine--tRNA ligase beta subunit from Streptococcus pyogenes serotype M2 (strain MGAS10270).